A 380-amino-acid polypeptide reads, in one-letter code: Histidinol-phosphate aminotransferase (380 aa).

Lys-235 carries the N6-(pyridoxal phosphate)lysine modification.

The protein belongs to the class-II pyridoxal-phosphate-dependent aminotransferase family. Histidinol-phosphate aminotransferase subfamily. Homodimer. Pyridoxal 5'-phosphate is required as a cofactor.

It catalyses the reaction L-histidinol phosphate + 2-oxoglutarate = 3-(imidazol-4-yl)-2-oxopropyl phosphate + L-glutamate. It participates in amino-acid biosynthesis; L-histidine biosynthesis; L-histidine from 5-phospho-alpha-D-ribose 1-diphosphate: step 7/9. This is Histidinol-phosphate aminotransferase from Rhodococcus jostii (strain RHA1).